The chain runs to 415 residues: 4-hydroxy-3-methylbut-2-enyl diphosphate reductase (415 aa).

A [4Fe-4S] cluster-binding site is contributed by C66. H96 is a (2E)-4-hydroxy-3-methylbut-2-enyl diphosphate binding site. H96 provides a ligand contact to dimethylallyl diphosphate. Isopentenyl diphosphate is bound at residue H96. C158 serves as a coordination point for [4Fe-4S] cluster. H186 is a binding site for (2E)-4-hydroxy-3-methylbut-2-enyl diphosphate. A dimethylallyl diphosphate-binding site is contributed by H186. Isopentenyl diphosphate is bound at residue H186. E188 serves as the catalytic Proton donor. T259 lines the (2E)-4-hydroxy-3-methylbut-2-enyl diphosphate pocket. C297 contacts [4Fe-4S] cluster. Positions 326, 327, 328, and 388 each coordinate (2E)-4-hydroxy-3-methylbut-2-enyl diphosphate. Dimethylallyl diphosphate contacts are provided by S326, S327, N328, and S388. Residues S326, S327, N328, and S388 each coordinate isopentenyl diphosphate.

It belongs to the IspH family. It depends on [4Fe-4S] cluster as a cofactor.

The catalysed reaction is isopentenyl diphosphate + 2 oxidized [2Fe-2S]-[ferredoxin] + H2O = (2E)-4-hydroxy-3-methylbut-2-enyl diphosphate + 2 reduced [2Fe-2S]-[ferredoxin] + 2 H(+). It carries out the reaction dimethylallyl diphosphate + 2 oxidized [2Fe-2S]-[ferredoxin] + H2O = (2E)-4-hydroxy-3-methylbut-2-enyl diphosphate + 2 reduced [2Fe-2S]-[ferredoxin] + 2 H(+). Its pathway is isoprenoid biosynthesis; dimethylallyl diphosphate biosynthesis; dimethylallyl diphosphate from (2E)-4-hydroxy-3-methylbutenyl diphosphate: step 1/1. It functions in the pathway isoprenoid biosynthesis; isopentenyl diphosphate biosynthesis via DXP pathway; isopentenyl diphosphate from 1-deoxy-D-xylulose 5-phosphate: step 6/6. Catalyzes the conversion of 1-hydroxy-2-methyl-2-(E)-butenyl 4-diphosphate (HMBPP) into a mixture of isopentenyl diphosphate (IPP) and dimethylallyl diphosphate (DMAPP). Acts in the terminal step of the DOXP/MEP pathway for isoprenoid precursor biosynthesis. The protein is 4-hydroxy-3-methylbut-2-enyl diphosphate reductase of Acaryochloris marina (strain MBIC 11017).